We begin with the raw amino-acid sequence, 257 residues long: Flavin-dependent thymidylate synthase (257 aa).

In terms of domain architecture, ThyX spans 1–202 (MNVKLVSYTR…PRLFRYVGPN (202 aa)). Residues Ser55, 79–81 (RHR), and Gln87 contribute to the FAD site. DUMP contacts are provided by residues 76-79 (QLVR), 87-91 (QMSHR), and Arg141. Residues 79–89 (RHRVASYTQMS) carry the ThyX motif motif. FAD contacts are provided by residues 157 to 159 (NAR) and Asn163. Arg168 serves as a coordination point for dUMP. The Involved in ionization of N3 of dUMP, leading to its activation role is filled by Arg168.

This sequence belongs to the thymidylate synthase ThyX family. As to quaternary structure, homotetramer. FAD serves as cofactor.

The enzyme catalyses dUMP + (6R)-5,10-methylene-5,6,7,8-tetrahydrofolate + NADPH + H(+) = dTMP + (6S)-5,6,7,8-tetrahydrofolate + NADP(+). It functions in the pathway pyrimidine metabolism; dTTP biosynthesis. In terms of biological role, catalyzes the reductive methylation of 2'-deoxyuridine-5'-monophosphate (dUMP) to 2'-deoxythymidine-5'-monophosphate (dTMP) while utilizing 5,10-methylenetetrahydrofolate (mTHF) as the methyl donor, and NADPH and FADH(2) as the reductant. The sequence is that of Flavin-dependent thymidylate synthase from Sulfurisphaera tokodaii (strain DSM 16993 / JCM 10545 / NBRC 100140 / 7) (Sulfolobus tokodaii).